Here is a 67-residue protein sequence, read N- to C-terminus: Alpha-conotoxin G1.5 (67 aa).

Positions 1–21 (MGMRMMFTVFLLVALATTVVS) are cleaved as a signal peptide. Positions 22–47 (FTSDRASDRRNAAVKAFDLISSTVKK) are excised as a propeptide. 2 disulfides stabilise this stretch: Cys-49-Cys-55 and Cys-50-Cys-63. Gln-65 bears the Glutamine amide mark.

It belongs to the conotoxin A superfamily. As to expression, expressed by the venom duct.

The protein localises to the secreted. In terms of biological role, alpha-conotoxins act on postsynaptic membranes, they bind to the nicotinic acetylcholine receptors (nAChR) and thus inhibit them. Globular isomer (C1-C3; C2-C4) selectively inhibits neuronal (non-muscle) nAChR subtypes particularly human alpha-3-beta-2/CHRNA3-CHRNB2 (IC(50)=35.7 nM) and alpha-9-alpha-10/CHRNA9-CHRNA10 nAChRs (IC(50)=569 nM), while the ribbon isomer (C1-C4; C2-C3) shows weak inhibition on alpha-3-beta-2/CHRNA3-CHRNB2, but not on all other receptors tested. The polypeptide is Alpha-conotoxin G1.5 (Conus geographus (Geography cone)).